The chain runs to 239 residues: Ribosomal RNA small subunit methyltransferase G (239 aa).

Residues glycine 77, phenylalanine 82, alanine 128–glutamate 129, and arginine 147 contribute to the S-adenosyl-L-methionine site. Residues isoleucine 215 to glycine 239 form a disordered region. Residues arginine 216–arginine 227 show a composition bias toward basic residues.

The protein belongs to the methyltransferase superfamily. RNA methyltransferase RsmG family.

It is found in the cytoplasm. Functionally, specifically methylates the N7 position of guanine in position 535 of 16S rRNA. This is Ribosomal RNA small subunit methyltransferase G from Bacillus velezensis (strain DSM 23117 / BGSC 10A6 / LMG 26770 / FZB42) (Bacillus amyloliquefaciens subsp. plantarum).